The chain runs to 492 residues: Pentatricopeptide repeat-containing protein At4g21705, mitochondrial (492 aa).

The N-terminal 17 residues, 1-17 (MNILRRIPANLIASRYY), are a transit peptide targeting the mitochondrion. 8 PPR repeats span residues 125–159 (NDKT…GFVT), 160–194 (SSLT…NVAP), 195–225 (DNYS…MERR), 231–261 (DWNT…SENR), 266–296 (DGEG…EKDV), 301–335 (INQD…GNCY), 336–370 (DFRV…GKAT), and 371–405 (TPES…EVGS).

The protein belongs to the PPR family. P subfamily.

The protein resides in the mitochondrion. The protein is Pentatricopeptide repeat-containing protein At4g21705, mitochondrial of Arabidopsis thaliana (Mouse-ear cress).